The primary structure comprises 449 residues: C4-dicarboxylate transport protein (449 aa).

Transmembrane regions (helical) follow at residues 18-38, 61-81, 93-113, 159-179, 202-222, 244-264, 346-366, and 369-389; these read PFYLQLYFWVIIAIILGALLG, MIISPVIFLTIVTGIASVAHV, VYFLFFSTLALLLGLVVAHVV, FVGDNILQVLFVAVLFGIALA, LVQMLMKMAPIGAFGAIAFTI, SLLFVLVILGAVSWLCGFSIL, LFLVAMLSSKGAAGVSGAGFI, and AATLAVVPEVPIAGMALILGV.

It belongs to the dicarboxylate/amino acid:cation symporter (DAACS) (TC 2.A.23) family.

The protein localises to the cell inner membrane. Its function is as follows. Responsible for the transport of dicarboxylates such as succinate, fumarate, and malate from the periplasm across the membrane. This is C4-dicarboxylate transport protein from Xylella fastidiosa (strain M23).